The following is a 183-amino-acid chain: Capsid protein (183 aa).

The tract at residues 136–183 is disordered; sequence NAPILSTLPETTVVRRRGRSPRRRTPSPRRRRSQSPRRRRSKSRESQC. Residues 149-177 are compositionally biased toward basic residues; it reads VRRRGRSPRRRTPSPRRRRSQSPRRRRSK. A phosphoserine; by host mark is found at serine 155, serine 162, and serine 170. Residues 155-160 form a 1; half-length repeat; that stretch reads SPRRRT. The segment at 155–176 is 3 X 7 AA repeats of S-P-R-R-R-[PR]-S; that stretch reads SPRRRTPSPRRRRSQSPRRRRS. The short motif at 158–175 is the Bipartite nuclear localization signal element; that stretch reads RRTPSPRRRRSQSPRRRR. A run of 2 repeats spans residues 162–168 and 170–176. The interval 177-183 is RNA binding; it reads KSRESQC.

Belongs to the orthohepadnavirus core antigen family. As to quaternary structure, homodimerizes, then multimerizes. Interacts with cytosol exposed regions of viral L glycoprotein present in the reticulum-to-Golgi compartment. Interacts with human FLNB. Phosphorylated form interacts with host importin alpha; this interaction depends on the exposure of the NLS, which itself depends upon genome maturation and/or phosphorylation of the capsid protein. Interacts with host NUP153. In terms of processing, phosphorylated by host SRPK1, SRPK2, and maybe protein kinase C or GAPDH. Phosphorylation is critical for pregenomic RNA packaging. Protein kinase C phosphorylation is stimulated by HBx protein and may play a role in transport of the viral genome to the nucleus at the late step during the viral replication cycle.

Its subcellular location is the virion. It localises to the host cytoplasm. Functionally, self assembles to form an icosahedral capsid. Most capsids appear to be large particles with an icosahedral symmetry of T=4 and consist of 240 copies of capsid protein, though a fraction forms smaller T=3 particles consisting of 180 capsid proteins. Entering capsids are transported along microtubules to the nucleus. Phosphorylation of the capsid is thought to induce exposure of nuclear localization signal in the C-terminal portion of the capsid protein that allows binding to the nuclear pore complex via the importin (karyopherin-) alpha and beta. Capsids are imported in intact form through the nuclear pore into the nuclear basket, where it probably binds NUP153. Only capsids that contain the mature viral genome can release the viral DNA and capsid protein into the nucleoplasm. Immature capsids get stuck in the basket. Capsids encapsulate the pre-genomic RNA and the P protein. Pre-genomic RNA is reverse-transcribed into DNA while the capsid is still in the cytoplasm. The capsid can then either be directed to the nucleus, providing more genomes for transcription, or bud through the endoplasmic reticulum to provide new virions. In Hepatitis B virus genotype C subtype ar (isolate Japan/S-207/1988) (HBV-C), this protein is Capsid protein.